The following is a 376-amino-acid chain: 5-amino-6-(D-ribitylamino)uracil--L-tyrosine 4-hydroxyphenyl transferase 1 (376 aa).

The region spanning 50-275 is the Radical SAM core domain; it reads VTYVVNRNIN…PGLEDLKVYA (226 aa). Cys64, Cys68, and Cys71 together coordinate [4Fe-4S] cluster.

The protein belongs to the radical SAM superfamily. CofH family. As to quaternary structure, consists of two subunits, CofG and CofH. It depends on [4Fe-4S] cluster as a cofactor.

The enzyme catalyses 5-amino-6-(D-ribitylamino)uracil + L-tyrosine + S-adenosyl-L-methionine = 5-amino-5-(4-hydroxybenzyl)-6-(D-ribitylimino)-5,6-dihydrouracil + 2-iminoacetate + 5'-deoxyadenosine + L-methionine + H(+). It functions in the pathway cofactor biosynthesis; coenzyme F0 biosynthesis. Its function is as follows. Catalyzes the radical-mediated synthesis of 5-amino-5-(4-hydroxybenzyl)-6-(D-ribitylimino)-5,6-dihydrouracil from 5-amino-6-(D-ribitylamino)uracil and L-tyrosine. This Methanosarcina mazei (strain ATCC BAA-159 / DSM 3647 / Goe1 / Go1 / JCM 11833 / OCM 88) (Methanosarcina frisia) protein is 5-amino-6-(D-ribitylamino)uracil--L-tyrosine 4-hydroxyphenyl transferase 1.